Here is a 130-residue protein sequence, read N- to C-terminus: Blasticidin-S deaminase (130 aa).

The CMP/dCMP-type deaminase domain maps to 1-129 (MPLSQEESTL…ELLPSGYMNR (129 aa)). S28 contributes to the substrate binding site. C54 lines the Zn(2+) pocket. The active-site Proton donor is the E56. R82 is a binding site for substrate. Zn(2+) is bound by residues C88 and C91. Residue Y126 coordinates substrate.

It belongs to the cytidine and deoxycytidylate deaminase family. Homotetramer. It depends on Zn(2+) as a cofactor.

The enzyme catalyses blasticidin S + H2O + H(+) = deaminohydroxyblasticidin S + NH4(+). In terms of biological role, catalyzes the deamination of the cytosine moiety of the antibiotics blasticidin S, cytomycin and acetylblasticidin S. In Aspergillus terreus (strain NIH 2624 / FGSC A1156), this protein is Blasticidin-S deaminase (bsd).